The following is a 451-amino-acid chain: Probable plasmid replicative DNA helicase (451 aa).

The SF4 helicase domain occupies 194-451; that stretch reads NDSFYDGLPT…SKFSAIKKVW (258 aa). 225-232 is an ATP binding site; sequence ARPSIGKT.

The protein belongs to the helicase family. DnaB subfamily. In terms of assembly, homohexamer.

It catalyses the reaction Couples ATP hydrolysis with the unwinding of duplex DNA at the replication fork by translocating in the 5'-3' direction. This creates two antiparallel DNA single strands (ssDNA). The leading ssDNA polymer is the template for DNA polymerase III holoenzyme which synthesizes a continuous strand.. The catalysed reaction is ATP + H2O = ADP + phosphate + H(+). A replicative DNA helicase, it participates in initiation and elongation during DNA replication. Travels ahead of the DNA replisome, separating dsDNA into templates for DNA synthesis. A processive ATP-dependent 5'-3' DNA helicase it has DNA-dependent ATPase activity. The protein is Probable plasmid replicative DNA helicase of Chlamydia muridarum (strain MoPn / Nigg).